A 176-amino-acid polypeptide reads, in one-letter code: Membrane-anchored junction protein (176 aa).

Residues 1 to 151 are Nuclear-facing; sequence MSLKPFTYPF…QHNSPPPKER (151 aa). The segment at 59 to 150 is disordered; the sequence is AVMRKRKHMD…LQHNSPPPKE (92 aa). Positions 95 to 107 are enriched in basic and acidic residues; it reads PPVETRRNRERKT. Polar residues predominate over residues 108-120; it reads QQGLQETLASDIT. A helical transmembrane segment spans residues 152-170; it reads AATGFFGFLSSLFPFRYFF. Residues 171 to 176 are Perinuclear space-facing; it reads RKSSHS.

This sequence belongs to the MAJIN family. As to quaternary structure, component of the MAJIN-TERB1-TERB2 complex, composed of MAJIN, TERB1 and TERB2.

The protein resides in the nucleus inner membrane. Its subcellular location is the chromosome. It localises to the telomere. In terms of biological role, meiosis-specific telomere-associated protein involved in meiotic telomere attachment to the nucleus inner membrane, a crucial step for homologous pairing and synapsis. Component of the MAJIN-TERB1-TERB2 complex, which promotes telomere cap exchange by mediating attachment of telomeric DNA to the inner nuclear membrane and replacement of the protective cap of telomeric chromosomes: in early meiosis, the MAJIN-TERB1-TERB2 complex associates with telomeric DNA and the shelterin/telosome complex. During prophase, the complex matures and promotes release of the shelterin/telosome complex from telomeric DNA. In the complex, MAJIN acts as the anchoring subunit to the nucleus inner membrane. MAJIN shows DNA-binding activity, possibly for the stabilization of telomere attachment on the nucleus inner membrane. The polypeptide is Membrane-anchored junction protein (Homo sapiens (Human)).